A 435-amino-acid chain; its full sequence is Methylenetetrahydrofolate--tRNA-(uracil-5-)-methyltransferase TrmFO (435 aa).

An FAD-binding site is contributed by 9–14; that stretch reads GAGLAG.

This sequence belongs to the MnmG family. TrmFO subfamily. FAD is required as a cofactor.

It localises to the cytoplasm. The catalysed reaction is uridine(54) in tRNA + (6R)-5,10-methylene-5,6,7,8-tetrahydrofolate + NADH + H(+) = 5-methyluridine(54) in tRNA + (6S)-5,6,7,8-tetrahydrofolate + NAD(+). It carries out the reaction uridine(54) in tRNA + (6R)-5,10-methylene-5,6,7,8-tetrahydrofolate + NADPH + H(+) = 5-methyluridine(54) in tRNA + (6S)-5,6,7,8-tetrahydrofolate + NADP(+). Its function is as follows. Catalyzes the folate-dependent formation of 5-methyl-uridine at position 54 (M-5-U54) in all tRNAs. In Enterococcus faecalis (strain ATCC 700802 / V583), this protein is Methylenetetrahydrofolate--tRNA-(uracil-5-)-methyltransferase TrmFO.